The following is a 474-amino-acid chain: ATP synthase subunit beta (474 aa).

Position 151 to 158 (Gly151 to Thr158) interacts with ATP.

This sequence belongs to the ATPase alpha/beta chains family. F-type ATPases have 2 components, CF(1) - the catalytic core - and CF(0) - the membrane proton channel. CF(1) has five subunits: alpha(3), beta(3), gamma(1), delta(1), epsilon(1). CF(0) has four main subunits: a(1), b(1), b'(1) and c(9-12).

Its subcellular location is the cell inner membrane. It catalyses the reaction ATP + H2O + 4 H(+)(in) = ADP + phosphate + 5 H(+)(out). Functionally, produces ATP from ADP in the presence of a proton gradient across the membrane. The catalytic sites are hosted primarily by the beta subunits. The polypeptide is ATP synthase subunit beta (Jannaschia sp. (strain CCS1)).